Consider the following 814-residue polypeptide: MMILSILATVVLLGALFYHRVSLFISSLILLAWTAALGVAGLWSAWVLVPLAIILVPFNFAPMRKSMISAPVFRGFRKVMPPMSRTEKEAIDAGTTWWEGDLFQGKPDWKKLHNYPQPRLTAEEQAFLDGPVEEACRMANDFQITHELADLPPELWAYLKEHRFFAMIIKKEYGGLEFSAYAQSRVLQKLSGVSGILAITVGVPNSLGPGELLQHYGTDEQKDHYLPRLARGQEIPCFALTSPEAGSDAGAIPDTGIVCMGEWQGQQVLGMRLTWNKRYITLAPIATVLGLAFKLSDPEKLLGGAEDLGITCALIPTTTPGVEIGRRHFPLNVPFQNGPTLGKDVFVPIDYIIGGPKMAGQGWRMLVECLSVGRGITLPSNSTGGVKSVALATGAYAHIRRQFKISIGKMEGIEEPLARIAGNAYVMDAAASLITYGIMLGEKPAVLSAIVKYHCTHRGQQSIIDAMDITGGKGIMLGQSNFLARAYQGAPIAITVEGANILTRSMMIFGQGAIRCHPYVLEEMEAAKNNDVNVFDKLLFKHIGHVGSNKVRSFWLGLTRGLTSSTPTGDATKRYYQHLNRLSANLALLSDVSMAVLGGSLKRRERISARLGDILSQLYLASAVLKRYDDEGRNEADLPLVHWGVQDALYQAEQAMDDLLQNFPNRVVAGLLNVVIFPTGRHYLAPSDKLDHKVAKILQVPNATRSRIGRGQYLTPSEHNPVGLLEEALVDVIAADPIHQRICKELGKNLPFTRLDELAHNALAKGLIDKDEAAILVKAEESRLRSINVDDFDPEELATKPVKLPEKVRKVEAA.

The active-site Proton acceptor is the Glu-497.

This sequence belongs to the acyl-CoA dehydrogenase family. Requires FAD as cofactor.

It carries out the reaction a medium-chain 2,3-saturated fatty acyl-CoA + oxidized [electron-transfer flavoprotein] + H(+) = a medium-chain (2E)-enoyl-CoA + reduced [electron-transfer flavoprotein]. The enzyme catalyses a long-chain 2,3-saturated fatty acyl-CoA + oxidized [electron-transfer flavoprotein] + H(+) = a long-chain (2E)-enoyl-CoA + reduced [electron-transfer flavoprotein]. It participates in lipid metabolism; fatty acid beta-oxidation. In terms of biological role, catalyzes the dehydrogenation of acyl-coenzymes A (acyl-CoAs) to 2-enoyl-CoAs, the first step of the beta-oxidation cycle of fatty acid degradation. Is required for the utilization of medium- and long-chain fatty acids as sole carbon sources for growth. The polypeptide is Acyl-coenzyme A dehydrogenase (fadE) (Escherichia coli O157:H7).